A 342-amino-acid chain; its full sequence is Nicotinate-nucleotide--dimethylbenzimidazole phosphoribosyltransferase (342 aa).

Residue glutamate 311 is the Proton acceptor of the active site.

Belongs to the CobT family.

It carries out the reaction 5,6-dimethylbenzimidazole + nicotinate beta-D-ribonucleotide = alpha-ribazole 5'-phosphate + nicotinate + H(+). It participates in nucleoside biosynthesis; alpha-ribazole biosynthesis; alpha-ribazole from 5,6-dimethylbenzimidazole: step 1/2. Functionally, catalyzes the synthesis of alpha-ribazole-5'-phosphate from nicotinate mononucleotide (NAMN) and 5,6-dimethylbenzimidazole (DMB). The chain is Nicotinate-nucleotide--dimethylbenzimidazole phosphoribosyltransferase from Vibrio atlanticus (strain LGP32) (Vibrio splendidus (strain Mel32)).